A 449-amino-acid chain; its full sequence is Phosphomethylpyrimidine synthase (449 aa).

Residues N80, M109, Y138, H173, 193-195 (SRG), 234-237 (DSLR), and E273 contribute to the substrate site. Residue H277 coordinates Zn(2+). Y300 is a binding site for substrate. H341 is a Zn(2+) binding site. Residues C421, C424, and C429 each coordinate [4Fe-4S] cluster.

It belongs to the ThiC family. Homodimer. The cofactor is [4Fe-4S] cluster.

The enzyme catalyses 5-amino-1-(5-phospho-beta-D-ribosyl)imidazole + S-adenosyl-L-methionine = 4-amino-2-methyl-5-(phosphooxymethyl)pyrimidine + CO + 5'-deoxyadenosine + formate + L-methionine + 3 H(+). The protein operates within cofactor biosynthesis; thiamine diphosphate biosynthesis. In terms of biological role, catalyzes the synthesis of the hydroxymethylpyrimidine phosphate (HMP-P) moiety of thiamine from aminoimidazole ribotide (AIR) in a radical S-adenosyl-L-methionine (SAM)-dependent reaction. This chain is Phosphomethylpyrimidine synthase, found in Campylobacter hominis (strain ATCC BAA-381 / DSM 21671 / CCUG 45161 / LMG 19568 / NCTC 13146 / CH001A).